A 458-amino-acid chain; its full sequence is Argininosuccinate lyase (458 aa).

This sequence belongs to the lyase 1 family. Argininosuccinate lyase subfamily.

Its subcellular location is the cytoplasm. It carries out the reaction 2-(N(omega)-L-arginino)succinate = fumarate + L-arginine. It functions in the pathway amino-acid biosynthesis; L-arginine biosynthesis; L-arginine from L-ornithine and carbamoyl phosphate: step 3/3. This chain is Argininosuccinate lyase, found in Actinobacillus pleuropneumoniae serotype 3 (strain JL03).